A 69-amino-acid chain; its full sequence is Copper chaperone CopZ (69 aa).

The region spanning 1 to 67 (MKQEFSVKGM…AINELGYQAE (67 aa)) is the HMA domain. The Cu cation site is built by C12 and C15.

In terms of assembly, monomer in the absence of copper. Homodimer or homooligomer in the presence of copper ions. Interacts with the copper ATPase CopA. Interacts with CopY via a charge-based interaction.

It localises to the cytoplasm. Functionally, acts as a copper chaperone by delivering 2 Cu(+) ions to CopY Zn(2+)-bound form. This transfer results in displacement of zinc and dissociation of CopY from the promoter, allowing transcription of the copYZAB operon. The polypeptide is Copper chaperone CopZ (copZ) (Enterococcus hirae (strain ATCC 9790 / DSM 20160 / JCM 8729 / LMG 6399 / NBRC 3181 / NCIMB 6459 / NCDO 1258 / NCTC 12367 / WDCM 00089 / R)).